A 428-amino-acid polypeptide reads, in one-letter code: Hydrolase acrC (428 aa).

Ser248 is an active-site residue.

It belongs to the AB hydrolase superfamily. FUS2 hydrolase family.

It functions in the pathway secondary metabolite biosynthesis. Functionally, hydrolase; part of the cluster that mediates the biosynthesis of acurin A, a highly reduced polyketide coupled to a serine via a peptide bond. The activities of the highly reducing polyketide synthase acrA and the nonribosomal peptide synthetase acrB are collectively responsible for the synthesis of the acurin A core structure with a heptaketide backbone produced by acrA covalently fused to a L-serine by acrB. After the formation of the PK-NRP hybrid product, it is detached from acrB by reductive release to set up the formation of the lactam ring by aldol condensation. The hydrolyase acrC then catalyzes water loss to generate a double bond in the ring. This double bond is probably reduced, which is followed by three oxidations at C-22 to generate the carboxylic acid moiety, involving probably the FAD-binding monooxygenase acrE and the cytochrome P450 monooxygenases acrD and acrF. Finally, a last methylation step performed by the O-methyltransferase acrG leads to the production of acurin A. The chain is Hydrolase acrC from Aspergillus aculeatus (strain ATCC 16872 / CBS 172.66 / WB 5094).